A 942-amino-acid polypeptide reads, in one-letter code: Zinc finger protein 865 (942 aa).

A disordered region spans residues 66–106; sequence FASTSTSKPKEFKVEAPPSSSLSPSKKPDIATTQQFNNQPP. Positions 96–106 are enriched in polar residues; the sequence is ATTQQFNNQPP. 20 C2H2-type zinc fingers span residues 172 to 194, 200 to 222, 282 to 304, 310 to 332, 338 to 360, 367 to 389, 466 to 488, 494 to 516, 522 to 544, 564 to 586, 592 to 614, 678 to 700, 706 to 728, 734 to 756, 762 to 784, 790 to 812, 818 to 840, 846 to 868, 874 to 896, and 902 to 924; these read FPCTVCQKSFKQSSHLVQHMLVH, YECNTCGRTYNHISSLIRHRRCH, FTCTLCWKVFKKQSHLHQHQIIH, FSCSVCAKSFNRRESLKRHVKTH, VQCEVCGKSFRDTSYLLKHQATH, YKCELCGKSYAAPQSLLRHKQVH, FCCNVCGRGFGRRETLKRHERIH, HQCSVCGKRFRESFHLTKHHVVH, YKCELCGKVFGYPQSLTRHKQIH, FGCTDCGERFPDSFHLMNHKELH, YVCDTCGKCFGFIENLMWHKLVH, FSCSICGQSFKHFLGLVTHKYVH, LACNVCGQNFAGAYDLLLHRRTH, FTCSVCGKRFWEAALLMRHQRCH, YRCTICGRGFLHSWYLRQHKVVH, YKCALCNKRFAQSSSLAEHQRLH, QRCPTCGKTFRYRSNLLEHQRVH, YRCDQCGKSFFYISSILRHQRSH, LRCSCCLKLFKDPKYFSKHVQTH, and FKCGACGEAFSNTYGLKKHRHAH.

This sequence belongs to the krueppel C2H2-type zinc-finger protein family.

Its subcellular location is the nucleus. May be involved in transcriptional regulation. The polypeptide is Zinc finger protein 865 (znf865) (Xenopus tropicalis (Western clawed frog)).